Reading from the N-terminus, the 522-residue chain is Protein nucleotidyltransferase YdiU (522 aa).

8 residues coordinate ATP: Gly109, Gly111, Arg112, Lys132, Asp144, Gly145, Arg195, and Arg202. Residue Asp271 is the Proton acceptor of the active site. Mg(2+) is bound by residues Asn272 and Asp281. Residue Asp281 coordinates ATP.

It belongs to the SELO family. Requires Mg(2+) as cofactor. Mn(2+) serves as cofactor.

It catalyses the reaction L-seryl-[protein] + ATP = 3-O-(5'-adenylyl)-L-seryl-[protein] + diphosphate. The catalysed reaction is L-threonyl-[protein] + ATP = 3-O-(5'-adenylyl)-L-threonyl-[protein] + diphosphate. It carries out the reaction L-tyrosyl-[protein] + ATP = O-(5'-adenylyl)-L-tyrosyl-[protein] + diphosphate. The enzyme catalyses L-histidyl-[protein] + UTP = N(tele)-(5'-uridylyl)-L-histidyl-[protein] + diphosphate. It catalyses the reaction L-seryl-[protein] + UTP = O-(5'-uridylyl)-L-seryl-[protein] + diphosphate. The catalysed reaction is L-tyrosyl-[protein] + UTP = O-(5'-uridylyl)-L-tyrosyl-[protein] + diphosphate. Nucleotidyltransferase involved in the post-translational modification of proteins. It can catalyze the addition of adenosine monophosphate (AMP) or uridine monophosphate (UMP) to a protein, resulting in modifications known as AMPylation and UMPylation. This chain is Protein nucleotidyltransferase YdiU, found in Burkholderia lata (strain ATCC 17760 / DSM 23089 / LMG 22485 / NCIMB 9086 / R18194 / 383).